The following is a 203-amino-acid chain: bMERB domain-containing protein 1 (203 aa).

One can recognise a bMERB domain in the interval 3–149; that stretch reads LKQSLSVHLE…EQEEDKEMAD (147 aa). The segment at 161 to 184 is disordered; sequence VTKTSASSRAEKKAEPPPSKPTVA.

This is bMERB domain-containing protein 1 (Bmerb1) from Mus musculus (Mouse).